The chain runs to 367 residues: Tetraacyldisaccharide 4'-kinase (367 aa).

68 to 75 contacts ATP; it reads VLGGSGKT.

This sequence belongs to the LpxK family.

It catalyses the reaction a lipid A disaccharide + ATP = a lipid IVA + ADP + H(+). Its pathway is glycolipid biosynthesis; lipid IV(A) biosynthesis; lipid IV(A) from (3R)-3-hydroxytetradecanoyl-[acyl-carrier-protein] and UDP-N-acetyl-alpha-D-glucosamine: step 6/6. Its function is as follows. Transfers the gamma-phosphate of ATP to the 4'-position of a tetraacyldisaccharide 1-phosphate intermediate (termed DS-1-P) to form tetraacyldisaccharide 1,4'-bis-phosphate (lipid IVA). The polypeptide is Tetraacyldisaccharide 4'-kinase (Chlamydia abortus (strain DSM 27085 / S26/3) (Chlamydophila abortus)).